Here is a 338-residue protein sequence, read N- to C-terminus: Anthranilate phosphoribosyltransferase (338 aa).

5-phospho-alpha-D-ribose 1-diphosphate contacts are provided by residues glycine 81, 84-85, threonine 89, 91-94, 109-117, and serine 121; these read GD, NIST, and KHGNRSMVS. Glycine 81 provides a ligand contact to anthranilate. Serine 93 contacts Mg(2+). Anthranilate is bound at residue asparagine 112. Residue arginine 167 coordinates anthranilate. Residues aspartate 226 and glutamate 227 each coordinate Mg(2+).

This sequence belongs to the anthranilate phosphoribosyltransferase family. As to quaternary structure, homodimer. It depends on Mg(2+) as a cofactor.

The enzyme catalyses N-(5-phospho-beta-D-ribosyl)anthranilate + diphosphate = 5-phospho-alpha-D-ribose 1-diphosphate + anthranilate. The protein operates within amino-acid biosynthesis; L-tryptophan biosynthesis; L-tryptophan from chorismate: step 2/5. Functionally, catalyzes the transfer of the phosphoribosyl group of 5-phosphorylribose-1-pyrophosphate (PRPP) to anthranilate to yield N-(5'-phosphoribosyl)-anthranilate (PRA). This chain is Anthranilate phosphoribosyltransferase, found in Acidithiobacillus ferrooxidans (strain ATCC 23270 / DSM 14882 / CIP 104768 / NCIMB 8455) (Ferrobacillus ferrooxidans (strain ATCC 23270)).